Consider the following 622-residue polypeptide: Low affinity potassium transport system protein Kup (622 aa).

12 helical membrane passes run 9-29 (LSAV…TSPL), 46-66 (PDVV…VVSV), 101-121 (ILVV…VITP), 137-157 (PALD…LFVI), 165-185 (VGKL…LLGL), 213-233 (VSFF…ALYA), 247-267 (WFTV…ALLL), 276-296 (PFFL…ATLA), 337-357 (IYIP…IIGF), 363-383 (LAAA…ILFC), 395-415 (FLVV…FSAN), and 416-436 (VLKL…MFII).

This sequence belongs to the HAK/KUP transporter (TC 2.A.72) family.

It localises to the cell inner membrane. It carries out the reaction K(+)(in) + H(+)(in) = K(+)(out) + H(+)(out). Responsible for the low-affinity transport of potassium into the cell. Likely operates as a K(+):H(+) symporter. The protein is Low affinity potassium transport system protein Kup of Yersinia pestis (strain Pestoides F).